Consider the following 101-residue polypeptide: Protein Tat (101 aa).

Residues 1-24 (MEPVDPNREPWNHPGSQPKTACTN) form an interaction with human CREBBP region. Positions 1 to 48 (MEPVDPNREPWNHPGSQPKTACTNCYCKKCCYHCQVCFLQKGLGISYG) are transactivation. Residues cysteine 22, cysteine 25, and cysteine 27 each coordinate Zn(2+). The interval 22–37 (CTNCYCKKCCYHCQVC) is cysteine-rich. Lysine 28 carries the post-translational modification N6-acetyllysine; by host PCAF. Positions 30, 33, 34, and 37 each coordinate Zn(2+). The segment at 38-48 (FLQKGLGISYG) is core. A disordered region spans residues 48–101 (GRKKRRQRRSAPPGSKTHQDLIPKQPLSQTQRKPTGPEESKKEVESKAEPDRFD). A Nuclear localization signal, RNA-binding (TAR), and protein transduction motif is present at residues 49 to 57 (RKKRRQRRS). The interaction with the host capping enzyme RNGTT stretch occupies residues 49-86 (RKKRRQRRSAPPGSKTHQDLIPKQPLSQTQRKPTGPEE). Lysine 50 and lysine 51 each carry N6-acetyllysine; by host EP300 and GCN5L2. Asymmetric dimethylarginine; by host PRMT6 occurs at positions 52 and 53. A Glycyl lysine isopeptide (Lys-Gly) (interchain with G-Cter in ubiquitin) cross-link involves residue lysine 71. Positions 82–101 (TGPEESKKEVESKAEPDRFD) are enriched in basic and acidic residues.

It belongs to the lentiviruses Tat family. As to quaternary structure, interacts with host CCNT1. Associates with the P-TEFb complex composed at least of Tat, P-TEFb (CDK9 and CCNT1), TAR RNA, RNA Pol II. Recruits the HATs CREBBP, TAF1/TFIID, EP300, PCAF and GCN5L2. Interacts with host KAT5/Tip60; this interaction targets the latter to degradation. Interacts with the host deacetylase SIRT1. Interacts with host capping enzyme RNGTT; this interaction stimulates RNGTT. Binds to host KDR, and to the host integrins ITGAV/ITGB3 and ITGA5/ITGB1. Interacts with host KPNB1/importin beta-1 without previous binding to KPNA1/importin alpha-1. Interacts with EIF2AK2. Interacts with host nucleosome assembly protein NAP1L1; this interaction may be required for the transport of Tat within the nucleus, since the two proteins interact at the nuclear rim. Interacts with host C1QBP/SF2P32; this interaction involves lysine-acetylated Tat. Interacts with the host chemokine receptors CCR2, CCR3 and CXCR4. Interacts with host DPP4/CD26; this interaction may trigger an anti-proliferative effect. Interacts with host LDLR. Interacts with the host extracellular matrix metalloproteinase MMP1. Interacts with host PRMT6; this interaction mediates Tat's methylation. Interacts with, and is ubiquitinated by MDM2/Hdm2. Interacts with host PSMC3 and HTATIP2. Interacts with STAB1; this interaction may overcome SATB1-mediated repression of IL2 and IL2RA (interleukin) in T cells by binding to the same domain than HDAC1. Interacts (when acetylated) with human CDK13, thereby increasing HIV-1 mRNA splicing and promoting the production of the doubly spliced HIV-1 protein Nef. Interacts with host TBP; this interaction modulates the activity of transcriptional pre-initiation complex. Interacts with host RELA. Interacts with host PLSCR1; this interaction negatively regulates Tat transactivation activity by altering its subcellular distribution. Post-translationally, asymmetrical arginine methylation by host PRMT6 seems to diminish the transactivation capacity of Tat and affects the interaction with host CCNT1. In terms of processing, acetylation by EP300, CREBBP, GCN5L2/GCN5 and PCAF regulates the transactivation activity of Tat. EP300-mediated acetylation of Lys-50 promotes dissociation of Tat from the TAR RNA through the competitive binding to PCAF's bromodomain. In addition, the non-acetylated Tat's N-terminus can also interact with PCAF. PCAF-mediated acetylation of Lys-28 enhances Tat's binding to CCNT1. Lys-50 is deacetylated by SIRT1. Polyubiquitination by host MDM2 does not target Tat to degradation, but activates its transactivation function and fosters interaction with CCNT1 and TAR RNA. Post-translationally, phosphorylated by EIF2AK2 on serine and threonine residues adjacent to the basic region important for TAR RNA binding and function. Phosphorylation of Tat by EIF2AK2 is dependent on the prior activation of EIF2AK2 by dsRNA.

The protein resides in the host nucleus. Its subcellular location is the host nucleolus. It is found in the host cytoplasm. It localises to the secreted. Its function is as follows. Transcriptional activator that increases RNA Pol II processivity, thereby increasing the level of full-length viral transcripts. Recognizes a hairpin structure at the 5'-LTR of the nascent viral mRNAs referred to as the transactivation responsive RNA element (TAR) and recruits the cyclin T1-CDK9 complex (P-TEFb complex) that will in turn hyperphosphorylate the RNA polymerase II to allow efficient elongation. The CDK9 component of P-TEFb and other Tat-activated kinases hyperphosphorylate the C-terminus of RNA Pol II that becomes stabilized and much more processive. Other factors such as HTATSF1/Tat-SF1, SUPT5H/SPT5, and HTATIP2 are also important for Tat's function. Besides its effect on RNA Pol II processivity, Tat induces chromatin remodeling of proviral genes by recruiting the histone acetyltransferases (HATs) CREBBP, EP300 and PCAF to the chromatin. This also contributes to the increase in proviral transcription rate, especially when the provirus integrates in transcriptionally silent region of the host genome. To ensure maximal activation of the LTR, Tat mediates nuclear translocation of NF-kappa-B by interacting with host RELA. Through its interaction with host TBP, Tat may also modulate transcription initiation. Tat can reactivate a latently infected cell by penetrating in it and transactivating its LTR promoter. In the cytoplasm, Tat is thought to act as a translational activator of HIV-1 mRNAs. Extracellular circulating Tat can be endocytosed by surrounding uninfected cells via the binding to several surface receptors such as CD26, CXCR4, heparan sulfate proteoglycans (HSPG) or LDLR. Neurons are rarely infected, but they internalize Tat via their LDLR. Through its interaction with nuclear HATs, Tat is potentially able to control the acetylation-dependent cellular gene expression. Modulates the expression of many cellular genes involved in cell survival, proliferation or in coding for cytokines or cytokine receptors. Tat plays a role in T-cell and neurons apoptosis. Tat induced neurotoxicity and apoptosis probably contribute to neuroAIDS. Circulating Tat also acts as a chemokine-like and/or growth factor-like molecule that binds to specific receptors on the surface of the cells, affecting many cellular pathways. In the vascular system, Tat binds to ITGAV/ITGB3 and ITGA5/ITGB1 integrins dimers at the surface of endothelial cells and competes with bFGF for heparin-binding sites, leading to an excess of soluble bFGF. The protein is Protein Tat of Homo sapiens (Human).